We begin with the raw amino-acid sequence, 154 residues long: Oleosin 16.4 kDa (154 aa).

Residue alanine 2 is modified to N-acetylalanine. The polar stretch occupies residues 2–33; the sequence is ADRDRSYRTFDQVVRGDRTNYQSGPSTTQVLT. The next 3 membrane-spanning stretches (helical) occupy residues 31 to 51, 65 to 85, and 86 to 106; these read VLTVLTLLPIGGTLLALAGLT, LFVIFSPVLVPAAIAVFMAVA, and GFLSSGAFGLTGLSSLSYVFN. A hydrophobic region spans residues 34 to 105; that stretch reads VLTLLPIGGT…TGLSSLSYVF (72 aa).

This sequence belongs to the oleosin family.

It is found in the lipid droplet. The protein resides in the membrane. Its function is as follows. May have a structural role to stabilize the lipid body during desiccation of the seed by preventing coalescence of the oil. Probably interacts with both lipid and phospholipid moieties of lipid bodies. May also provide recognition signals for specific lipase anchorage in lipolysis during seedling growth. The chain is Oleosin 16.4 kDa (MATP7) from Gossypium hirsutum (Upland cotton).